Reading from the N-terminus, the 353-residue chain is MTHTVPQNMKAAVMHNTREIKIETLPVPDINHDEVLIKVMAVGICGSDLHYYTNGRIGNYVVEKPFILGHECAGEIAAVGSSVDQFKVGDRVAVEPGVTCGRCEACKEGRYNLCPDVQFLATPPVDGAFVQYIKMRQDFVFLIPDSLSYEEAALIEPFSVGIHAAARTKLQPGSTIAIMGMGPVGLMAVAAAKAFGAGTIIVTDLEPLRLEAAKKMGATHIINIREQDALEEIKTITNDRGVDVAWETAGNPAALQSALASVRRGGKLAIVGLPSQNEIPLNVPFIADNEIDIYGIFRYANTYPKGIEFLASGIVDTKHLVTDQYSLEQTQDAMERALQFKNECLKVMVYPNR.

Residue Cys45 coordinates Zn(2+). Substrate is bound at residue Tyr51. Zn(2+) contacts are provided by His70 and Glu71. Glu156 contributes to the substrate binding site. NAD(+) contacts are provided by residues Val184, Asp204, Arg209, 271 to 273 (VGL), and 296 to 298 (IFR). Residues Arg298 and Tyr299 each coordinate substrate.

This sequence belongs to the zinc-containing alcohol dehydrogenase family. In terms of assembly, homotetramer. Zn(2+) serves as cofactor.

The enzyme catalyses keto-D-fructose + NADH + H(+) = D-sorbitol + NAD(+). It carries out the reaction xylitol + NAD(+) = D-xylulose + NADH + H(+). The catalysed reaction is L-iditol + NAD(+) = keto-L-sorbose + NADH + H(+). In terms of biological role, polyol dehydrogenase that catalyzes the NAD(+)-dependent oxidation of various sugar alcohols. Is mostly active with D-sorbitol (D-glucitol), xylitol and L-iditol as substrates, leading to the C2-oxidized products D-fructose, D-xylulose and L-sorbose, respectively. In Bacillus subtilis (strain 168), this protein is Sorbitol dehydrogenase.